The following is a 577-amino-acid chain: Arginine--tRNA ligase (577 aa).

A 'HIGH' region motif is present at residues 122 to 132; it reads PNVAKEMHVGH.

Belongs to the class-I aminoacyl-tRNA synthetase family. In terms of assembly, monomer.

The protein localises to the cytoplasm. The catalysed reaction is tRNA(Arg) + L-arginine + ATP = L-arginyl-tRNA(Arg) + AMP + diphosphate. This is Arginine--tRNA ligase from Salmonella dublin (strain CT_02021853).